The chain runs to 262 residues: Hydroxyethylthiazole kinase (262 aa).

Residue Met-44 coordinates substrate. 2 residues coordinate ATP: Arg-118 and Thr-166. Gly-193 is a substrate binding site.

The protein belongs to the Thz kinase family. The cofactor is Mg(2+).

It carries out the reaction 5-(2-hydroxyethyl)-4-methylthiazole + ATP = 4-methyl-5-(2-phosphooxyethyl)-thiazole + ADP + H(+). Its pathway is cofactor biosynthesis; thiamine diphosphate biosynthesis; 4-methyl-5-(2-phosphoethyl)-thiazole from 5-(2-hydroxyethyl)-4-methylthiazole: step 1/1. In terms of biological role, catalyzes the phosphorylation of the hydroxyl group of 4-methyl-5-beta-hydroxyethylthiazole (THZ). This Chlamydia felis (strain Fe/C-56) (Chlamydophila felis) protein is Hydroxyethylthiazole kinase.